The primary structure comprises 164 residues: Protein-export protein SecB (164 aa).

It belongs to the SecB family. As to quaternary structure, homotetramer, a dimer of dimers. One homotetramer interacts with 1 SecA dimer.

It localises to the cytoplasm. Functionally, one of the proteins required for the normal export of preproteins out of the cell cytoplasm. It is a molecular chaperone that binds to a subset of precursor proteins, maintaining them in a translocation-competent state. It also specifically binds to its receptor SecA. This chain is Protein-export protein SecB, found in Caulobacter sp. (strain K31).